We begin with the raw amino-acid sequence, 361 residues long: Phosphoserine aminotransferase (361 aa).

Residue arginine 42 participates in L-glutamate binding. Pyridoxal 5'-phosphate-binding positions include 76-77 (AT), tryptophan 102, threonine 152, aspartate 172, and glutamine 195. The residue at position 196 (lysine 196) is an N6-(pyridoxal phosphate)lysine. 237–238 (NT) lines the pyridoxal 5'-phosphate pocket.

This sequence belongs to the class-V pyridoxal-phosphate-dependent aminotransferase family. SerC subfamily. In terms of assembly, homodimer. Pyridoxal 5'-phosphate is required as a cofactor.

The protein resides in the cytoplasm. The enzyme catalyses O-phospho-L-serine + 2-oxoglutarate = 3-phosphooxypyruvate + L-glutamate. It catalyses the reaction 4-(phosphooxy)-L-threonine + 2-oxoglutarate = (R)-3-hydroxy-2-oxo-4-phosphooxybutanoate + L-glutamate. Its pathway is amino-acid biosynthesis; L-serine biosynthesis; L-serine from 3-phospho-D-glycerate: step 2/3. It functions in the pathway cofactor biosynthesis; pyridoxine 5'-phosphate biosynthesis; pyridoxine 5'-phosphate from D-erythrose 4-phosphate: step 3/5. Functionally, catalyzes the reversible conversion of 3-phosphohydroxypyruvate to phosphoserine and of 3-hydroxy-2-oxo-4-phosphonooxybutanoate to phosphohydroxythreonine. This Xanthomonas euvesicatoria pv. vesicatoria (strain 85-10) (Xanthomonas campestris pv. vesicatoria) protein is Phosphoserine aminotransferase.